A 156-amino-acid polypeptide reads, in one-letter code: Putative NrdI-like protein (156 aa).

The protein belongs to the NrdI family.

This chain is Putative NrdI-like protein, found in Streptococcus pneumoniae serotype 4 (strain ATCC BAA-334 / TIGR4).